The chain runs to 437 residues: MQINLKFKKKDVRWYLLRLFSNLQFSIILLLVIASFSVIGTIIEQNKDLDFYQAHYSVSGEHFIILNWKNIELFGLNHVYTTWWFLTLLFIFSLSLLVCSLSRQIPSLQNARRWCFYKNPNQFKKFTGSQEIQKTTLHLVASCLQKFNYHIFQQGNSIYCYKGLLGRLAPIFVHASIILLLIGSVLGLVSGFSAQEMVPSGELFRLQNIIASGQFSYIPQDFSARVNNFIIEYNQDNSISQFFSDISILDTEGTELKHSTIHVNSPLQFKGLTIYQTDWDIIAIRIKINNTDTLQIPLKKVVLPNNKIWVGLIAQDQDNQLALVLQDLQKQATLYNKSGEKIMSVTIGEKYFIDNNIIAFLSIVPSTGLQIKSDPGIPIVYTSFFFLITSVSVSYISYSQIWIIEKKHRFYIGGVTNRAQLTFEEELLKISNRSSKI.

3 helical membrane-spanning segments follow: residues 23–43 (LQFS…GTII), 82–102 (TWWF…CSLS), and 168–188 (LAPI…VLGL).

This sequence belongs to the Ccs1/CcsB family. In terms of assembly, may interact with CcsA.

The protein localises to the plastid. It is found in the chloroplast thylakoid membrane. In terms of biological role, required during biogenesis of c-type cytochromes (cytochrome c6 and cytochrome f) at the step of heme attachment. In Porphyra purpurea (Red seaweed), this protein is Cytochrome c biogenesis protein Ccs1.